The sequence spans 504 residues: AMP phosphorylase (504 aa).

AMP contacts are provided by residues G169, S195–S200, and T204. D257 functions as the Proton donor in the catalytic mechanism. 2 residues coordinate AMP: S265 and K289.

This sequence belongs to the thymidine/pyrimidine-nucleoside phosphorylase family. Type 2 subfamily.

It carries out the reaction AMP + phosphate = alpha-D-ribose 1,5-bisphosphate + adenine. It catalyses the reaction CMP + phosphate = cytosine + alpha-D-ribose 1,5-bisphosphate. The catalysed reaction is UMP + phosphate = alpha-D-ribose 1,5-bisphosphate + uracil. Its function is as follows. Catalyzes the conversion of AMP and phosphate to adenine and ribose 1,5-bisphosphate (R15P). Exhibits phosphorylase activity toward CMP and UMP in addition to AMP. Functions in an archaeal AMP degradation pathway, together with R15P isomerase and RubisCO. The sequence is that of AMP phosphorylase from Methanococcus aeolicus (strain ATCC BAA-1280 / DSM 17508 / OCM 812 / Nankai-3).